Reading from the N-terminus, the 252-residue chain is tRNA (guanine-N(1)-)-methyltransferase (252 aa).

Residues glycine 113 and 133-138 contribute to the S-adenosyl-L-methionine site; that span reads IGDYVL.

This sequence belongs to the RNA methyltransferase TrmD family. As to quaternary structure, homodimer.

Its subcellular location is the cytoplasm. The enzyme catalyses guanosine(37) in tRNA + S-adenosyl-L-methionine = N(1)-methylguanosine(37) in tRNA + S-adenosyl-L-homocysteine + H(+). Its function is as follows. Specifically methylates guanosine-37 in various tRNAs. The protein is tRNA (guanine-N(1)-)-methyltransferase of Xanthomonas campestris pv. campestris (strain B100).